The sequence spans 189 residues: Elongation factor P (189 aa).

The protein belongs to the elongation factor P family.

It is found in the cytoplasm. It participates in protein biosynthesis; polypeptide chain elongation. Functionally, involved in peptide bond synthesis. Stimulates efficient translation and peptide-bond synthesis on native or reconstituted 70S ribosomes in vitro. Probably functions indirectly by altering the affinity of the ribosome for aminoacyl-tRNA, thus increasing their reactivity as acceptors for peptidyl transferase. This chain is Elongation factor P, found in Pseudomonas putida (strain ATCC 700007 / DSM 6899 / JCM 31910 / BCRC 17059 / LMG 24140 / F1).